Here is a 47-residue protein sequence, read N- to C-terminus: Large ribosomal subunit protein bL36B (47 aa).

The protein belongs to the bacterial ribosomal protein bL36 family.

This is Large ribosomal subunit protein bL36B from Pectobacterium atrosepticum (strain SCRI 1043 / ATCC BAA-672) (Erwinia carotovora subsp. atroseptica).